The primary structure comprises 179 residues: Large ribosomal subunit protein uL6 (179 aa).

It belongs to the universal ribosomal protein uL6 family. As to quaternary structure, part of the 50S ribosomal subunit.

Its function is as follows. This protein binds to the 23S rRNA, and is important in its secondary structure. It is located near the subunit interface in the base of the L7/L12 stalk, and near the tRNA binding site of the peptidyltransferase center. This Geobacter sulfurreducens (strain ATCC 51573 / DSM 12127 / PCA) protein is Large ribosomal subunit protein uL6.